We begin with the raw amino-acid sequence, 377 residues long: Hydrogenase maturation factor HypD (377 aa).

Fe cation-binding residues include Cys-41, Cys-69, and Cys-72.

It belongs to the HypD family. The cofactor is [4Fe-4S] cluster.

The protein operates within protein modification; [NiFe] hydrogenase maturation. In terms of biological role, involved in the maturation of [NiFe] hydrogenases. Involved in the biosynthesis of the Fe(CN)(2)CO cofactor. The protein is Hydrogenase maturation factor HypD of Rhodobacter capsulatus (Rhodopseudomonas capsulata).